The primary structure comprises 762 residues: Cell surface protein (762 aa).

The first 26 residues, 1 to 26 (MKNLKKLIAVVSTFALVFSAMAVGFA), serve as a signal peptide directing secretion. SLH domains follow at residues 27–90 (ATTP…EMAK), 92–155 (EKSA…WPYG), and 156–204 (YLAK…KEVL). O-linked (Glc...) tyrosine glycosylation is found at Tyr297, Tyr516, Tyr520, and Tyr632.

In terms of processing, glycosylated; contains 8% carbohydrates, which correspond to about 40 to 50 sugar molecules per monomer. O-linked glycans consist of Glc, GalNAc and GlcNAc.

The protein resides in the secreted. It is found in the cell wall. It localises to the S-layer. The S-layer is a paracrystalline mono-layered assembly of proteins which coat the surface of bacteria. This Thermoanaerobacter kivui (Acetogenium kivui) protein is Cell surface protein.